A 222-amino-acid polypeptide reads, in one-letter code: 7-cyano-7-deazaguanine synthase (222 aa).

11–21 (FSGGQDSTTCL) lines the ATP pocket. Positions 187, 195, 198, and 201 each coordinate Zn(2+).

The protein belongs to the QueC family. The cofactor is Zn(2+).

It catalyses the reaction 7-carboxy-7-deazaguanine + NH4(+) + ATP = 7-cyano-7-deazaguanine + ADP + phosphate + H2O + H(+). Its pathway is purine metabolism; 7-cyano-7-deazaguanine biosynthesis. Catalyzes the ATP-dependent conversion of 7-carboxy-7-deazaguanine (CDG) to 7-cyano-7-deazaguanine (preQ(0)). This is 7-cyano-7-deazaguanine synthase from Actinobacillus pleuropneumoniae serotype 3 (strain JL03).